The following is a 516-amino-acid chain: 2,3-bisphosphoglycerate-independent phosphoglycerate mutase (516 aa).

Mn(2+)-binding residues include Asp15 and Ser65. Catalysis depends on Ser65, which acts as the Phosphoserine intermediate. Substrate contacts are provided by residues His126, 156-157 (RD), Arg188, Arg194, 263-266 (RADR), and Lys336. Mn(2+) contacts are provided by Asp403, His407, Asp444, His445, and His463.

The protein belongs to the BPG-independent phosphoglycerate mutase family. As to quaternary structure, monomer. Requires Mn(2+) as cofactor.

It carries out the reaction (2R)-2-phosphoglycerate = (2R)-3-phosphoglycerate. The protein operates within carbohydrate degradation; glycolysis; pyruvate from D-glyceraldehyde 3-phosphate: step 3/5. Its function is as follows. Catalyzes the interconversion of 2-phosphoglycerate and 3-phosphoglycerate. The protein is 2,3-bisphosphoglycerate-independent phosphoglycerate mutase of Francisella tularensis subsp. holarctica (strain OSU18).